The following is a 136-amino-acid chain: Urease subunit beta (136 aa).

The tract at residues 113 to 136 (NDEYAGVFGDNGAENVNKKGGKRS) is disordered.

Belongs to the urease beta subunit family. Heterotrimer of UreA (gamma), UreB (beta) and UreC (alpha) subunits. Three heterotrimers associate to form the active enzyme.

It is found in the cytoplasm. The enzyme catalyses urea + 2 H2O + H(+) = hydrogencarbonate + 2 NH4(+). The protein operates within nitrogen metabolism; urea degradation; CO(2) and NH(3) from urea (urease route): step 1/1. This is Urease subunit beta from Staphylococcus aureus (strain USA300).